The sequence spans 516 residues: 2-isopropylmalate synthase (516 aa).

The Pyruvate carboxyltransferase domain occupies 10-271 (IRIFDTTLRD…TTGIDTRELA (262 aa)). Positions 19, 205, 207, and 241 each coordinate Mn(2+). The tract at residues 396 to 516 (ELVSFRVEAG…REKASNRETP (121 aa)) is regulatory domain.

Belongs to the alpha-IPM synthase/homocitrate synthase family. LeuA type 1 subfamily. As to quaternary structure, homodimer. Mn(2+) serves as cofactor.

Its subcellular location is the cytoplasm. The enzyme catalyses 3-methyl-2-oxobutanoate + acetyl-CoA + H2O = (2S)-2-isopropylmalate + CoA + H(+). Its pathway is amino-acid biosynthesis; L-leucine biosynthesis; L-leucine from 3-methyl-2-oxobutanoate: step 1/4. Functionally, catalyzes the condensation of the acetyl group of acetyl-CoA with 3-methyl-2-oxobutanoate (2-ketoisovalerate) to form 3-carboxy-3-hydroxy-4-methylpentanoate (2-isopropylmalate). The protein is 2-isopropylmalate synthase of Acidimicrobium ferrooxidans (strain DSM 10331 / JCM 15462 / NBRC 103882 / ICP).